A 232-amino-acid polypeptide reads, in one-letter code: BTB/POZ domain-containing protein KCTD11 (232 aa).

In terms of domain architecture, BTB spans 1 to 49 (MLGAMFRAGTPMTPNLNPEGGGHYFIDRDGKAFRHILNFLRLGRLDLPL).

As to quaternary structure, homopentamer. Interacts with KCTD6 and KCTD21; KCTD11 and KCTD6 or KCTD21 may associate in pentameric assemblies. Component of the BCR(KCTD11) E3 ubiquitin ligase complex, at least composed of CUL3 and KCTD11 and RBX1. Interacts (via BTB domain) with CUL3; initially a 4:4 stoichiometry has been reported, however, electron microscopy revealed pentameric states of the BTB domain.

Its pathway is protein modification; protein ubiquitination. Its function is as follows. Plays a role as a marker and a regulator of neuronal differentiation; Up-regulated by a variety of neurogenic signals, such as retinoic acid, epidermal growth factor/EGF and NGFB/nerve growth factor. Induces apoptosis, growth arrest and the expression of cyclin-dependent kinase inhibitor CDKN1B. Plays a role as a tumor repressor and inhibits cell growth and tumorigenicity of medulloblastoma (MDB). Acts as a probable substrate-specific adapter for a BCR (BTB-CUL3-RBX1) E3 ubiquitin-protein ligase complex towards HDAC1. Functions as antagonist of the Hedgehog pathway on cell proliferation and differentiation by affecting the nuclear transfer of transcription factor GLI1, thus maintaining cerebellar granule cells in undifferentiated state, this effect probably occurs via HDAC1 down-regulation, keeping GLI1 acetylated and inactive. The polypeptide is BTB/POZ domain-containing protein KCTD11 (KCTD11) (Bos taurus (Bovine)).